Reading from the N-terminus, the 957-residue chain is Isoleucine--tRNA ligase (957 aa).

The 'HIGH' region signature appears at 57 to 67 (PYANGDIHIGH). Glutamate 594 contacts L-isoleucyl-5'-AMP. Positions 635–639 (KMSKS) match the 'KMSKS' region motif. Lysine 638 provides a ligand contact to ATP. 4 residues coordinate Zn(2+): cysteine 920, cysteine 923, cysteine 940, and cysteine 943.

It belongs to the class-I aminoacyl-tRNA synthetase family. IleS type 1 subfamily. Monomer. The cofactor is Zn(2+).

Its subcellular location is the cytoplasm. It catalyses the reaction tRNA(Ile) + L-isoleucine + ATP = L-isoleucyl-tRNA(Ile) + AMP + diphosphate. Catalyzes the attachment of isoleucine to tRNA(Ile). As IleRS can inadvertently accommodate and process structurally similar amino acids such as valine, to avoid such errors it has two additional distinct tRNA(Ile)-dependent editing activities. One activity is designated as 'pretransfer' editing and involves the hydrolysis of activated Val-AMP. The other activity is designated 'posttransfer' editing and involves deacylation of mischarged Val-tRNA(Ile). In Laribacter hongkongensis (strain HLHK9), this protein is Isoleucine--tRNA ligase.